The sequence spans 405 residues: MASASSPEGASSSSPEKVKMVTVLSIDGGGVRGIIPATILAFLEKELQKLDGPDARIADYFDVVAGTSTGGLLTAMLTAPNENNRPLFAADELAKFYIEHSPSIFPQKNWVLSKIAGTLRMVSGPKYDGKYLHSLLREKLGDTRLDKALTNVVIPTFDIANLQPTIFSKFELKYKPLKNALLSDISISTSAAPTFFPAHYFETKDDNGQTREFNLVDGGVAANNPTLCAMSQVSKYIILEDKEDCDFFPVKPTEYGKFMVISIGCGSNHDQKYKAKDAAKWGIFNWLIKGSSAPIIDMFTSASADMVDIHLGVLFSALQCEKNYLRIQYDQLTGSAGSIDDCSKENMDNLVKIGEMLLDKNVSRVDLETGHYVDVAGEGTNRDQLAKFAKQLSDERRRRQNEPSN.

The region spanning 24-230 is the PNPLA domain; sequence LSIDGGGVRG…AANNPTLCAM (207 aa). A GXGXXG motif is present at residues 28-33; the sequence is GGGVRG. The short motif at 66–70 is the GXSXG element; sequence GTSTG. The active-site Nucleophile is the serine 68. Aspartate 217 serves as the catalytic Proton acceptor. Residues 217–219 carry the DGA/G motif; that stretch reads DGG.

The protein belongs to the patatin family.

In terms of biological role, possesses non-specific lipolytic acyl hydrolase (LAH) activity. Hydrolyzes phospholipids as well as galactolipids. May play a role in disease resistance. In Oryza sativa subsp. indica (Rice), this protein is Patatin-like protein 2 (PLP2).